The sequence spans 558 residues: CTP synthase (558 aa).

An amidoligase domain region spans residues 1 to 267 (MTKFVFVTGG…AQQTLELLNL (267 aa)). Ser13 contacts CTP. Ser13 lines the UTP pocket. Residues 14-19 (SIGKGI) and Asp71 each bind ATP. Residues Asp71 and Glu141 each coordinate Mg(2+). Residues 148–150 (DIE), 188–193 (KTKPTQ), and Lys224 each bind CTP. UTP-binding positions include 188–193 (KTKPTQ) and Lys224. Residues 292 to 534 (EVALVGKYVQ…VKASVDYNHV (243 aa)) form the Glutamine amidotransferase type-1 domain. Gly354 contacts L-glutamine. Cys381 functions as the Nucleophile; for glutamine hydrolysis in the catalytic mechanism. L-glutamine is bound by residues 382 to 385 (MGMQ), Glu405, and Arg462. Active-site residues include His507 and Glu509.

The protein belongs to the CTP synthase family. Homotetramer.

It catalyses the reaction UTP + L-glutamine + ATP + H2O = CTP + L-glutamate + ADP + phosphate + 2 H(+). It carries out the reaction L-glutamine + H2O = L-glutamate + NH4(+). The enzyme catalyses UTP + NH4(+) + ATP = CTP + ADP + phosphate + 2 H(+). Its pathway is pyrimidine metabolism; CTP biosynthesis via de novo pathway; CTP from UDP: step 2/2. With respect to regulation, allosterically activated by GTP, when glutamine is the substrate; GTP has no effect on the reaction when ammonia is the substrate. The allosteric effector GTP functions by stabilizing the protein conformation that binds the tetrahedral intermediate(s) formed during glutamine hydrolysis. Inhibited by the product CTP, via allosteric rather than competitive inhibition. Functionally, catalyzes the ATP-dependent amination of UTP to CTP with either L-glutamine or ammonia as the source of nitrogen. Regulates intracellular CTP levels through interactions with the four ribonucleotide triphosphates. This Gloeothece citriformis (strain PCC 7424) (Cyanothece sp. (strain PCC 7424)) protein is CTP synthase.